The sequence spans 622 residues: Chaperone protein HscA homolog (622 aa).

Belongs to the heat shock protein 70 family.

Functionally, chaperone involved in the maturation of iron-sulfur cluster-containing proteins. Has a low intrinsic ATPase activity which is markedly stimulated by HscB. The protein is Chaperone protein HscA homolog of Burkholderia pseudomallei (strain 1710b).